Consider the following 79-residue polypeptide: U-actitoxin-Avd8b (79 aa).

The signal sequence occupies residues 1–19; it reads MKSLVIVFVVLLGVAMISA. The propeptide occupies 20–36; sequence NEEELLAILQDQRNDAR.

This sequence belongs to the sea anemone 8 toxin family.

It is found in the secreted. The protein resides in the nematocyst. The polypeptide is U-actitoxin-Avd8b (Anemonia viridis (Snakelocks anemone)).